A 799-amino-acid polypeptide reads, in one-letter code: Dipeptidyl peptidase family member 1 (799 aa).

The Cytoplasmic segment spans residues 1–31 (MTAEADLLEGYDEELGGNESQKRDCKGITTA). The chain crosses the membrane as a helical; Signal-anchor for type II membrane protein span at residues 32 to 52 (IVVVLLILVMIFAALVFFTPL). The Lumenal segment spans residues 53-799 (FAAKSFGSWR…FLRQCFYTDK (747 aa)). 4 N-linked (GlcNAc...) asparagine glycosylation sites follow: N64, N138, N267, and N335. Cysteines 474 and 477 form a disulfide. N481 carries N-linked (GlcNAc...) asparagine glycosylation. C482 and C500 are disulfide-bonded. Residue N512 is glycosylated (N-linked (GlcNAc...) asparagine). Residues S669, D742, and H774 each act as charge relay system in the active site. C689 and C794 are oxidised to a cystine.

Belongs to the peptidase S9B family. DPPIV subfamily.

It localises to the cell membrane. Functionally, removes N-terminal dipeptides sequentially from polypeptides. Essential for control of distal tip cell migration. The polypeptide is Dipeptidyl peptidase family member 1 (dpf-1) (Caenorhabditis elegans).